Reading from the N-terminus, the 634-residue chain is MTEAVSDVTLAKASPKPNSFWTLALGSIGVVYGDIGTSPLYALKESLTAASAGGALTQEMIFGVLSLMLWTLLIIVTLKYVLLIMRADNHGEGGTLTLMALLQSVMRRRFAAISLLGMAGAALFYGDAIITPAISVLSAVEGLKLVAPGFDPYILPLSMAILVGLFLVQSWGTAAVATWFGPLMLIWFGLMAVAGTANLMDNLHILGAVNPIYGIDFLLHHGHAGLLALGAVFLTVTGAEALYADMGHFGRRPIQVAWLVLVFPALALCYLGQGAMLLSHPERLENPFFLLFPDWALLPMVWIATGATIIASQAVISGAYSLTQQAIQLGLLPRMEIRRTSETEKGQIYIPRANWLLLIAVLYLVFAFKSSSALASAYGIAVTGTMVLTSIMAFFVMRKCWHWPAAVATAIIVPFLIIDLIFLMANLLKIVDGGWIPLMIGVGLMGVMVTWRRGSKIVARKTVRDEIDLNDFIASISVSSSISRVRGTAVFLTGNPNSTPTSLMHNLKHNKVLHEKNVILRVATEDVPRVSEDERLSYEPVNDSFAKITIRFGYMETPDVPKALVACRPLGFAFDMMSTSFFLSRRVIRQANPSEMPRWQGLLFVNMAKWSDDASLYFKIPTGRAVEVGMQITV.

Transmembrane regions (helical) follow at residues 20–40 (FWTLALGSIGVVYGDIGTSPL), 64–84 (VLSLMLWTLLIIVTLKYVLLI), 110–130 (FAAISLLGMAGAALFYGDAII), 148–168 (PGFDPYILPLSMAILVGLFLV), 174–194 (AAVATWFGPLMLIWFGLMAVA), 224–244 (AGLLALGAVFLTVTGAEALYA), 258–278 (WLVLVFPALALCYLGQGAMLL), 290–310 (LLFPDWALLPMVWIATGATII), 348–368 (IYIPRANWLLLIAVLYLVFAF), 377–397 (AYGIAVTGTMVLTSIMAFFVM), 405–425 (AAVATAIIVPFLIIDLIFLMA), and 430–450 (IVDGGWIPLMIGVGLMGVMVT).

This sequence belongs to the HAK/KUP transporter (TC 2.A.72) family.

It localises to the cell inner membrane. The catalysed reaction is K(+)(in) + H(+)(in) = K(+)(out) + H(+)(out). Its function is as follows. Transport of potassium into the cell. Likely operates as a K(+):H(+) symporter. The polypeptide is Probable potassium transport system protein Kup 2 (Rhodopseudomonas palustris (strain ATCC BAA-98 / CGA009)).